The following is a 1729-amino-acid chain: Cullin-7 (1729 aa).

The disordered stretch occupies residues 350-388 (DRPRSSARSPGSIFQPQLADVSPGLPATQAQPSFRRSRH). Ser-371 bears the Phosphoserine mark. Residues 392–465 (RSEFASGNTY…HWHMLEILGF (74 aa)) enclose the CPH domain. Positions 632–642 (SEDAAKVEAKE) are enriched in basic and acidic residues. The tract at residues 632–654 (SEDAAKVEAKEPPSQSPNTPLQR) is disordered. One can recognise a DOC domain in the interval 845 to 1024 (PINIPFFDVF…HTRLFYMVRA (180 aa)). Residues 1373–1405 (VGHGASGKEHKSEKEEEAGAAAAVDVAEGEEEE) form a disordered region. Residue Lys-1607 forms a Glycyl lysine isopeptide (Lys-Gly) (interchain with G-Cter in NEDD8) linkage.

This sequence belongs to the cullin family. As to quaternary structure, component of the 3M complex, composed of core components CUL7, CCDC8 and OBSL1. Component of the Cul7-RING(FBXW8) complex consisting of CUL7, RBX1, SKP1 and FBXW8. Within the Cul7-RING(FBXW8) complex interacts with FBXW8 and RBX1, but not with SKP1. Interacts with CUL1 (via the C-terminal domain); the interaction seems to be mediated by FBXW8; it is likely specific to FBXW8, but not other F-box proteins. Interacts (via the CPH domain) with p53/TP53; the interaction preferentially involves tetrameric and dimeric p53/TP53; this interaction recruits p53/TP53 for ubiquitination by neddylated CUL1-RBX1. The CUL7-CUL9 heterodimer seems to interact specifically with p53/TP53. Interacts with FBXW8; interaction is mutually exclusive of binding to CUL9 or p53/TP53. Interacts with CUL9; leading to inhibited CUL9 activity. Interacts with OBSL1. Interacts (as part of the 3M complex) with HDAC4 and HDAC5; it is negatively regulated by ANKRA2.

The protein resides in the cytoplasm. It is found in the cytoskeleton. The protein localises to the microtubule organizing center. Its subcellular location is the centrosome. It localises to the perinuclear region. The protein resides in the golgi apparatus. It functions in the pathway protein modification; protein ubiquitination. In terms of biological role, core component of the 3M and Cul7-RING(FBXW8) complexes, which mediate the ubiquitination and subsequent proteasomal degradation of target proteins. Core component of the 3M complex, a complex required to regulate microtubule dynamics and genome integrity. It is unclear how the 3M complex regulates microtubules, it could act by controlling the level of a microtubule stabilizer. The Cul7-RING(FBXW8) complex alone lacks ubiquitination activity and does not promote polyubiquitination and proteasomal degradation of p53/TP53. However it mediates recruitment of p53/TP53 for ubiquitination by neddylated CUL1-RBX1. Interaction with CUL9 is required to inhibit CUL9 activity and ubiquitination of BIRC5. The Cul7-RING(FBXW8) complex also mediates ubiquitination and consequent degradation of target proteins such as GORASP1, IRS1 and MAP4K1/HPK1. Ubiquitination of GORASP1 regulates Golgi morphogenesis and dendrite patterning in brain. Mediates ubiquitination and degradation of IRS1 in a mTOR-dependent manner: the Cul7-RING(FBXW8) complex recognizes and binds IRS1 previously phosphorylated by S6 kinase (RPS6KB1 or RPS6KB2). The Cul7-RING(FBXW8) complex also mediates ubiquitination of MAP4K1/HPK1: recognizes and binds autophosphorylated MAP4K1/HPK1, leading to its degradation, thereby affecting cell proliferation and differentiation. Acts as a regulator in trophoblast cell epithelial-mesenchymal transition and placental development. While the Cul7-RING(FBXW8) and the 3M complexes are associated and involved in common processes, CUL7 and the Cul7-RING(FBXW8) complex may have additional functions. Probably plays a role in the degradation of proteins involved in endothelial proliferation and/or differentiation. The sequence is that of Cullin-7 (CUL7) from Pongo abelii (Sumatran orangutan).